A 410-amino-acid chain; its full sequence is Multifunctional CCA protein (410 aa).

Residues Gly8 and Arg11 each coordinate ATP. CTP-binding residues include Gly8 and Arg11. Glu21 and Asp23 together coordinate Mg(2+). Residues Arg91, Arg137, and Arg140 each coordinate ATP. Residues Arg91, Arg137, and Arg140 each coordinate CTP. The 102-residue stretch at 228 to 329 folds into the HD domain; sequence TGIHSLMTLR…VKLLEQVDAF (102 aa).

This sequence belongs to the tRNA nucleotidyltransferase/poly(A) polymerase family. Bacterial CCA-adding enzyme type 1 subfamily. Monomer. Can also form homodimers and oligomers. Requires Mg(2+) as cofactor. It depends on Ni(2+) as a cofactor.

The enzyme catalyses a tRNA precursor + 2 CTP + ATP = a tRNA with a 3' CCA end + 3 diphosphate. The catalysed reaction is a tRNA with a 3' CCA end + 2 CTP + ATP = a tRNA with a 3' CCACCA end + 3 diphosphate. Catalyzes the addition and repair of the essential 3'-terminal CCA sequence in tRNAs without using a nucleic acid template. Adds these three nucleotides in the order of C, C, and A to the tRNA nucleotide-73, using CTP and ATP as substrates and producing inorganic pyrophosphate. tRNA 3'-terminal CCA addition is required both for tRNA processing and repair. Also involved in tRNA surveillance by mediating tandem CCA addition to generate a CCACCA at the 3' terminus of unstable tRNAs. While stable tRNAs receive only 3'-terminal CCA, unstable tRNAs are marked with CCACCA and rapidly degraded. The chain is Multifunctional CCA protein from Legionella pneumophila (strain Lens).